A 563-amino-acid chain; its full sequence is MDYKNKIAQLIKQHVDLDIDAIEKLIEIPPKSEMGDYAFPCFQLSKVMRKAPNMIAETLKDAINKDGFERIENLGPYLNFFVDKGVFAENTINKILKDGDSYGESNIGEGKTVCVEYSSPNIAKPFHVGHLFTTAIGNSLYKMFKKEGYDVVGLNHLGDWGTQFGKLISAYNRWVDEEALEKAPIDELLRIYVKFHDEAEKDPSLEDEGRMYFKKLETGDAEAQALWKRFRDLSLKEFERVYDILGVKFDSLAGEAFYNDKMDVVVNELKDKGLLVESNGAQVVMLDDYNMPPCIVLKGDGASIYATRDLAAAMYRKKTYDFYKSIYVVGSPQALHFKQVFKVLELAGHEWANDCVHVGFGLVKFADRKLSTRKGEVVLLDDLIRESVEKTLEVINEKNPELENKEEVAKKIGVGAIIFTYLKNSREKDIVFDWKEILSFEGETGPYVQYSYARANSIISRAENISSEVDYSKLSSKEEFELVKVLANFNNQIKLATDKLEPSILTRYVIDVAKSFNKFYNAHSVLNLDDEVLKATRLSLVKSSLQVIKNGLELLGIDVVEKM.

The 'HIGH' region signature appears at 120 to 130 (PNIAKPFHVGH).

The protein belongs to the class-I aminoacyl-tRNA synthetase family. Monomer.

Its subcellular location is the cytoplasm. The enzyme catalyses tRNA(Arg) + L-arginine + ATP = L-arginyl-tRNA(Arg) + AMP + diphosphate. This is Arginine--tRNA ligase from Clostridium botulinum (strain Alaska E43 / Type E3).